Reading from the N-terminus, the 29-residue chain is Galanin (29 aa).

A29 is modified (alanine amide).

It belongs to the galanin family.

Its subcellular location is the secreted. Its function is as follows. Contracts smooth muscle of the gastrointestinal and genitourinary tract, regulates growth hormone release, modulates insulin release, and may be involved in the control of adrenal secretion. The chain is Galanin (GAL) from Ovis aries (Sheep).